Consider the following 150-residue polypeptide: 3-hydroxyacyl-[acyl-carrier-protein] dehydratase FabZ (150 aa).

Residue histidine 54 is part of the active site.

The protein belongs to the thioester dehydratase family. FabZ subfamily.

The protein localises to the cytoplasm. It carries out the reaction a (3R)-hydroxyacyl-[ACP] = a (2E)-enoyl-[ACP] + H2O. Functionally, involved in unsaturated fatty acids biosynthesis. Catalyzes the dehydration of short chain beta-hydroxyacyl-ACPs and long chain saturated and unsaturated beta-hydroxyacyl-ACPs. The sequence is that of 3-hydroxyacyl-[acyl-carrier-protein] dehydratase FabZ from Colwellia psychrerythraea (strain 34H / ATCC BAA-681) (Vibrio psychroerythus).